Here is a 455-residue protein sequence, read N- to C-terminus: Ribulose bisphosphate carboxylase large chain (455 aa).

The residue at position 5 (K5) is an N6,N6,N6-trimethyllysine. Residues N114 and T164 each coordinate substrate. Catalysis depends on K166, which acts as the Proton acceptor. K168 is a binding site for substrate. Mg(2+) contacts are provided by K192, D194, and E195. Position 192 is an N6-carboxylysine (K192). The active-site Proton acceptor is the H285. 3 residues coordinate substrate: R286, H318, and S370.

The protein belongs to the RuBisCO large chain family. Type I subfamily. Heterohexadecamer of 8 large chains and 8 small chains; disulfide-linked. The disulfide link is formed within the large subunit homodimers. Mg(2+) is required as a cofactor. Post-translationally, the disulfide bond which can form in the large chain dimeric partners within the hexadecamer appears to be associated with oxidative stress and protein turnover.

It is found in the plastid. It localises to the chloroplast. It catalyses the reaction 2 (2R)-3-phosphoglycerate + 2 H(+) = D-ribulose 1,5-bisphosphate + CO2 + H2O. The enzyme catalyses D-ribulose 1,5-bisphosphate + O2 = 2-phosphoglycolate + (2R)-3-phosphoglycerate + 2 H(+). Functionally, ruBisCO catalyzes two reactions: the carboxylation of D-ribulose 1,5-bisphosphate, the primary event in carbon dioxide fixation, as well as the oxidative fragmentation of the pentose substrate in the photorespiration process. Both reactions occur simultaneously and in competition at the same active site. The polypeptide is Ribulose bisphosphate carboxylase large chain (Lupinus microcarpus (Chick lupine)).